The primary structure comprises 157 residues: 6,7-dimethyl-8-ribityllumazine synthase (157 aa).

5-amino-6-(D-ribitylamino)uracil-binding positions include phenylalanine 30, alanine 64 to glutamate 66, and cysteine 88 to isoleucine 90. (2S)-2-hydroxy-3-oxobutyl phosphate is bound at residue glutamate 93–threonine 94. Histidine 96 serves as the catalytic Proton donor. Asparagine 121 is a binding site for 5-amino-6-(D-ribitylamino)uracil. Residue arginine 135 participates in (2S)-2-hydroxy-3-oxobutyl phosphate binding.

The protein belongs to the DMRL synthase family.

It carries out the reaction (2S)-2-hydroxy-3-oxobutyl phosphate + 5-amino-6-(D-ribitylamino)uracil = 6,7-dimethyl-8-(1-D-ribityl)lumazine + phosphate + 2 H2O + H(+). The protein operates within cofactor biosynthesis; riboflavin biosynthesis; riboflavin from 2-hydroxy-3-oxobutyl phosphate and 5-amino-6-(D-ribitylamino)uracil: step 1/2. Functionally, catalyzes the formation of 6,7-dimethyl-8-ribityllumazine by condensation of 5-amino-6-(D-ribitylamino)uracil with 3,4-dihydroxy-2-butanone 4-phosphate. This is the penultimate step in the biosynthesis of riboflavin. In Albidiferax ferrireducens (strain ATCC BAA-621 / DSM 15236 / T118) (Rhodoferax ferrireducens), this protein is 6,7-dimethyl-8-ribityllumazine synthase.